A 154-amino-acid chain; its full sequence is tRNA-splicing endonuclease (154 aa).

Residues Tyr86, His102, and Lys133 contribute to the active site.

Belongs to the tRNA-intron endonuclease family. Archaeal short subfamily. Homotetramer; although the tetramer contains four active sites, only two participate in the cleavage. Therefore, it should be considered as a dimer of dimers.

The catalysed reaction is pretRNA = a 3'-half-tRNA molecule with a 5'-OH end + a 5'-half-tRNA molecule with a 2',3'-cyclic phosphate end + an intron with a 2',3'-cyclic phosphate and a 5'-hydroxyl terminus.. Functionally, endonuclease that removes tRNA introns. Cleaves pre-tRNA at the 5'- and 3'-splice sites to release the intron. The products are an intron and two tRNA half-molecules bearing 2',3' cyclic phosphate and 5'-OH termini. Recognizes a pseudosymmetric substrate in which 2 bulged loops of 3 bases are separated by a stem of 4 bp. In Nanoarchaeum equitans (strain Kin4-M), this protein is tRNA-splicing endonuclease.